We begin with the raw amino-acid sequence, 150 residues long: MRLVIQRVSKAAVHIGGVCAGAVGPGLLILAGIEEADTEEDVRWLANKAAAMRIFSDADGKMNLSVREVSGSVLVVSQFTLHASTRKGNRPSFIRAARPERAIPLYELFKKELASLLEGRVESGEFGADMQVSLINDGPVTIFMDSRKRE.

The Gly-cisPro motif, important for rejection of L-amino acids motif lies at 138–139; sequence GP.

This sequence belongs to the DTD family. As to quaternary structure, homodimer.

It localises to the cytoplasm. The enzyme catalyses glycyl-tRNA(Ala) + H2O = tRNA(Ala) + glycine + H(+). It catalyses the reaction a D-aminoacyl-tRNA + H2O = a tRNA + a D-alpha-amino acid + H(+). In terms of biological role, an aminoacyl-tRNA editing enzyme that deacylates mischarged D-aminoacyl-tRNAs. Also deacylates mischarged glycyl-tRNA(Ala), protecting cells against glycine mischarging by AlaRS. Acts via tRNA-based rather than protein-based catalysis; rejects L-amino acids rather than detecting D-amino acids in the active site. By recycling D-aminoacyl-tRNA to D-amino acids and free tRNA molecules, this enzyme counteracts the toxicity associated with the formation of D-aminoacyl-tRNA entities in vivo and helps enforce protein L-homochirality. The sequence is that of D-aminoacyl-tRNA deacylase from Akkermansia muciniphila (strain ATCC BAA-835 / DSM 22959 / JCM 33894 / BCRC 81048 / CCUG 64013 / CIP 107961 / Muc).